Reading from the N-terminus, the 232-residue chain is U2 small nuclear ribonucleoprotein B'' (232 aa).

In terms of domain architecture, RRM 1 spans 10 to 89 (QTVYLRNLNE…KRMRVQYAKT (80 aa)). Residues 92–159 (DCLATEDGST…QEPPAPPNNI (68 aa)) are disordered. The span at 108 to 123 (KKQEEKAAEKKRRAEE) shows a compositional bias: basic and acidic residues. Over residues 127 to 151 (SGPNAAAQSNGTGYQASRLGKTSQE) the composition is skewed to polar residues. In terms of domain architecture, RRM 2 spans 158-232 (NILFIQNLPA…NPMAISYAKK (75 aa)).

Belongs to the RRM U1 A/B'' family. In terms of assembly, component of the spliceosome where it is associated with snRNP U2.

It localises to the nucleus. The protein resides in the cajal body. It is found in the nucleoplasm. Its subcellular location is the cytoplasm. Functionally, involved in nuclear pre-mRNA splicing. The polypeptide is U2 small nuclear ribonucleoprotein B'' (Oryza sativa subsp. indica (Rice)).